The sequence spans 106 residues: Urease subunit beta (106 aa).

The protein belongs to the urease beta subunit family. In terms of assembly, heterotrimer of UreA (gamma), UreB (beta) and UreC (alpha) subunits. Three heterotrimers associate to form the active enzyme.

Its subcellular location is the cytoplasm. It catalyses the reaction urea + 2 H2O + H(+) = hydrogencarbonate + 2 NH4(+). The protein operates within nitrogen metabolism; urea degradation; CO(2) and NH(3) from urea (urease route): step 1/1. This Acinetobacter baumannii (strain SDF) protein is Urease subunit beta.